Reading from the N-terminus, the 411-residue chain is 2-oxoglutarate-dependent dioxygenase AOP3 (411 aa).

The 98-residue stretch at Gly259–Pro356 folds into the Fe2OG dioxygenase domain. Positions 279, 281, and 336 each coordinate Fe cation. Arg347 is a binding site for 2-oxoglutarate.

The protein belongs to the iron/ascorbate-dependent oxidoreductase family. It depends on Fe(2+) as a cofactor. As to expression, not expressed.

2-oxoglutarate-dependent dioxygenase involved in glucosinolates biosynthesis. Catalyzes the conversion of methylsulfinylalkyl glucosinolates to hydroxyalkyl glucosinolates. This chain is 2-oxoglutarate-dependent dioxygenase AOP3 (AOP3), found in Arabidopsis thaliana (Mouse-ear cress).